A 442-amino-acid polypeptide reads, in one-letter code: ATP-dependent protease ATPase subunit HslU (442 aa).

Residues Ile-18, 60 to 65 (GVGKTE), Asp-255, Glu-320, and Arg-392 each bind ATP.

It belongs to the ClpX chaperone family. HslU subfamily. A double ring-shaped homohexamer of HslV is capped on each side by a ring-shaped HslU homohexamer. The assembly of the HslU/HslV complex is dependent on binding of ATP.

It is found in the cytoplasm. Its function is as follows. ATPase subunit of a proteasome-like degradation complex; this subunit has chaperone activity. The binding of ATP and its subsequent hydrolysis by HslU are essential for unfolding of protein substrates subsequently hydrolyzed by HslV. HslU recognizes the N-terminal part of its protein substrates and unfolds these before they are guided to HslV for hydrolysis. The chain is ATP-dependent protease ATPase subunit HslU from Aeromonas hydrophila subsp. hydrophila (strain ATCC 7966 / DSM 30187 / BCRC 13018 / CCUG 14551 / JCM 1027 / KCTC 2358 / NCIMB 9240 / NCTC 8049).